Consider the following 269-residue polypeptide: Transmembrane protein 41B (269 aa).

6 consecutive transmembrane segments (helical) span residues 30 to 50 (TSLL…FLVY), 87 to 107 (FYVQ…TFAI), 125 to 147 (LALF…LSYL), 175 to 195 (LINY…FINI), 203 to 223 (PLKV…FVAI), and 240 to 260 (SWNS…PALF). Residues 118–229 (GFLYPFPLAL…FVAIKAGTTL (112 aa)) are VTT domain; required for its function in autophagy.

The protein belongs to the TMEM41 family.

The protein resides in the endoplasmic reticulum membrane. Its subcellular location is the endomembrane system. It catalyses the reaction a 1,2-diacyl-sn-glycero-3-phospho-L-serine(in) = a 1,2-diacyl-sn-glycero-3-phospho-L-serine(out). The catalysed reaction is cholesterol(in) = cholesterol(out). The enzyme catalyses a 1,2-diacyl-sn-glycero-3-phosphocholine(in) = a 1,2-diacyl-sn-glycero-3-phosphocholine(out). It carries out the reaction a 1,2-diacyl-sn-glycero-3-phosphoethanolamine(in) = a 1,2-diacyl-sn-glycero-3-phosphoethanolamine(out). Its function is as follows. Phospholipid scramblase involved in lipid homeostasis and membrane dynamics processes. Has phospholipid scramblase activity toward cholesterol and phosphatidylserine, as well as phosphatidylethanolamine and phosphatidylcholine. Required for autophagosome formation: participates in early stages of autophagosome biogenesis at the endoplasmic reticulum (ER) membrane by reequilibrating the leaflets of the ER as lipids are extracted by ATG2 (ATG2A or ATG2B) to mediate autophagosome assembly. In addition to autophagy, involved in other processes in which phospholipid scramblase activity is required. Required for normal motor neuron development. This Gallus gallus (Chicken) protein is Transmembrane protein 41B.